The primary structure comprises 72 residues: UPF0270 protein Ent638_3781 (72 aa).

The protein belongs to the UPF0270 family.

This Enterobacter sp. (strain 638) protein is UPF0270 protein Ent638_3781.